The primary structure comprises 235 residues: Carbohydrate deacetylase (235 aa).

Mg(2+) is bound by residues H61 and H124.

The protein belongs to the YdjC deacetylase family. Requires Mg(2+) as cofactor.

Its function is as follows. Probably catalyzes the deacetylation of acetylated carbohydrates an important step in the degradation of oligosaccharides. This Bacillus cereus (strain 03BB102) protein is Carbohydrate deacetylase.